A 976-amino-acid polypeptide reads, in one-letter code: MKLKSVFRSVLKYRKTNLSLLLLITYSIITLLYIFDHERYKLNLPKEDEHPEFNDLLETAWGDLQIITASFHPYTSKENDKVHDYLLKRVLEITGNSSFASVSDDKESERSILFQQQDPFNESSRFSRVTYFESSNILVKLEGKNPEEEGLLLSAHFDSVPTGYGATDDGMGVVSLLANLKYHIKHRPNRTLIFNFNNNEEFGLLGASTYFNHSWSNLTKYVINLEGTGAGGKAVLFRTSDTSTAKIYQQSVKENPFGNSIYQQGFYSRYVRSETDYKIYEENGMRGWDVAFYKPRNLYHTIKDSIQYTSKASLWHMLHTSLQLSAYVASNSLDTADQTPACYFDFIGLKFFVISAKTLFYWNCIFLLVSPVVAIGLYLISRDRMTWKSHSWLSWTRFPLSLAAGIIVQKLFSNDIIRSNPLTFSRNYFWPISAFFTQVIFTSYVLINCSNFFFPCADMKSLSIIELFIILWTILLFTSKLLYSSDYRYTGLYPLSIFFLLSTIAAILRLLALALGMRTRKRLGRECRDHHSNYSSHSQIDMERDGQENLEQPQDQFTSSQDDQASIQDDNVSTTSAGPSHNVDEDHGMDSSSQQHDERVPLLKGSNSMEEGLSTRENSLKLEYTDYAWIIQFLLIVPIPSFILFNSVDVIMDALNHTVQEGSKATFDVLRFGMVGSILIALPILPFFYKVNYITISLTALLFLISASKTLLVHPFTNSNPLKVRFSQNIDLSQGNAASVHVLGREGNFLKPMLQDLPSIKYSSTHINCTSVTNGMELCMYDGMQPNLLSTNGNTNISSMVKVHVLHNNRNSTERSPYEPIVAELLLEVKENRACTLTFESRHQAKSPVREITVYQKKNSAPQKANITKTIKSASGINELQLHKLDFDKETYHIGVQWFPKLLTDGNVEDDKLGTKDELSVSISCYWGEYDSESVVNGTAVRKIPAFDELINYAPLSFSFTNEQKGLVIVKDAIIL.

Over M1–K15 the chain is Cytoplasmic. A helical transmembrane segment spans residues T16–D36. Residues H37–L359 lie on the Vacuolar side of the membrane. Residues N96 and N121 are each glycosylated (N-linked (GlcNAc...) asparagine). 2 residues coordinate Zn(2+): H156 and D168. N189 carries an N-linked (GlcNAc...) asparagine glycan. E200 acts as the Proton acceptor in catalysis. E201 contributes to the Zn(2+) binding site. N212 and N217 each carry an N-linked (GlcNAc...) asparagine glycan. Zn(2+)-binding residues include E226 and H300. The helical transmembrane segment at F360 to I380 threads the bilayer. Residues S381 to W392 are Cytoplasmic-facing. Residues L393–F412 traverse the membrane as a helical segment. Residues S413–Y428 are Vacuolar-facing. A helical transmembrane segment spans residues F429–C449. Topologically, residues S450 to S461 are cytoplasmic. Residues L462–L482 form a helical membrane-spanning segment. Topologically, residues Y483–S496 are vacuolar. The helical transmembrane segment at I497–M517 threads the bilayer. Residues R518–Y627 lie on the Cytoplasmic side of the membrane. The tract at residues R528–E610 is disordered. The segment covering N549–T558 has biased composition (polar residues). The span at S559–D570 shows a compositional bias: low complexity. The span at N582–P601 shows a compositional bias: basic and acidic residues. The chain crosses the membrane as a helical span at residues A628–V648. Topologically, residues D649–D668 are vacuolar. N-linked (GlcNAc...) asparagine glycosylation is present at N656. Residues V669–Y689 form a helical membrane-spanning segment. Residues K690 to N692 are Cytoplasmic-facing. A helical transmembrane segment spans residues Y693 to V713. Over H714–L976 the chain is Vacuolar. N-linked (GlcNAc...) asparagine glycans are attached at residues N768, N796, N811, N866, and N937.

The protein belongs to the peptidase M28 family. Requires Zn(2+) as cofactor.

It is found in the vacuole membrane. Functionally, may be involved in vacuolar sorting and osmoregulation. The polypeptide is Vacuolar membrane protease (Saccharomyces cerevisiae (strain JAY291) (Baker's yeast)).